The sequence spans 55 residues: MPQLNPAPWFTILVFSWMIFLAIIPTKVMGHTSPNDSSPLSTEKHKTESWDWPWQ.

The chain crosses the membrane as a helical span at residues 4–24 (LNPAPWFTILVFSWMIFLAII). A compositionally biased stretch (polar residues) spans 32-41 (TSPNDSSPLS). The segment at 32-55 (TSPNDSSPLSTEKHKTESWDWPWQ) is disordered.

It belongs to the ATPase protein 8 family. In terms of assembly, component of the ATP synthase complex composed at least of ATP5F1A/subunit alpha, ATP5F1B/subunit beta, ATP5MC1/subunit c (homooctomer), MT-ATP6/subunit a, MT-ATP8/subunit 8, ATP5ME/subunit e, ATP5MF/subunit f, ATP5MG/subunit g, ATP5MK/subunit k, ATP5MJ/subunit j, ATP5F1C/subunit gamma, ATP5F1D/subunit delta, ATP5F1E/subunit epsilon, ATP5PF/subunit F6, ATP5PB/subunit b, ATP5PD/subunit d, ATP5PO/subunit OSCP. ATP synthase complex consists of a soluble F(1) head domain (subunits alpha(3) and beta(3)) - the catalytic core - and a membrane F(0) domain - the membrane proton channel (subunits c, a, 8, e, f, g, k and j). These two domains are linked by a central stalk (subunits gamma, delta, and epsilon) rotating inside the F1 region and a stationary peripheral stalk (subunits F6, b, d, and OSCP).

The protein localises to the mitochondrion membrane. Its function is as follows. Subunit 8, of the mitochondrial membrane ATP synthase complex (F(1)F(0) ATP synthase or Complex V) that produces ATP from ADP in the presence of a proton gradient across the membrane which is generated by electron transport complexes of the respiratory chain. ATP synthase complex consist of a soluble F(1) head domain - the catalytic core - and a membrane F(1) domain - the membrane proton channel. These two domains are linked by a central stalk rotating inside the F(1) region and a stationary peripheral stalk. During catalysis, ATP synthesis in the catalytic domain of F(1) is coupled via a rotary mechanism of the central stalk subunits to proton translocation. In vivo, can only synthesize ATP although its ATP hydrolase activity can be activated artificially in vitro. Part of the complex F(0) domain. In Formosania lacustris (Oriental stream loach), this protein is ATP synthase F(0) complex subunit 8.